Reading from the N-terminus, the 420-residue chain is MAPK/MAK/MRK overlapping kinase (420 aa).

In terms of domain architecture, Protein kinase spans 4-285 (YKAIGKIGEG…AHQALQHPYF (282 aa)). ATP contacts are provided by residues 10–18 (IGEGTFSEV) and lysine 33. Aspartate 128 functions as the Proton acceptor in the catalytic mechanism. Over residues 311–322 (PESSSHNWSFSQ) the composition is skewed to polar residues. Residues 311-344 (PESSSHNWSFSQEGRKQKQSLRHEEGHARRQGPT) form a disordered region. The span at 323-338 (EGRKQKQSLRHEEGHA) shows a compositional bias: basic and acidic residues.

This sequence belongs to the protein kinase superfamily. CMGC Ser/Thr protein kinase family. CDC2/CDKX subfamily. It depends on Mg(2+) as a cofactor. In terms of processing, autophosphorylated. As to expression, highly expressed in testis, and less in kidney, brain and lung.

The protein localises to the cytoplasm. It localises to the cell projection. Its subcellular location is the cilium. It is found in the nucleus. The enzyme catalyses L-seryl-[protein] + ATP = O-phospho-L-seryl-[protein] + ADP + H(+). The catalysed reaction is L-threonyl-[protein] + ATP = O-phospho-L-threonyl-[protein] + ADP + H(+). Phosphorylation appears to increase the enzymatic activity. Functionally, able to phosphorylate several exogenous substrates and to undergo autophosphorylation. Negatively regulates cilium length in a cAMP and mTORC1 signaling-dependent manner. This chain is MAPK/MAK/MRK overlapping kinase (Mok), found in Mus musculus (Mouse).